We begin with the raw amino-acid sequence, 423 residues long: Adenylosuccinate synthetase (423 aa).

Residues 12–18 and 40–42 contribute to the GTP site; these read GDEGKGK and GHT. D13 functions as the Proton acceptor in the catalytic mechanism. 2 residues coordinate Mg(2+): D13 and G40. Residues 13–16, 38–41, T129, R143, Q221, T236, and R300 each bind IMP; these read DEGK and NAGH. H41 serves as the catalytic Proton donor. 296–302 is a binding site for substrate; that stretch reads SVTGRKR. Residues R302, 328–330, and 408–410 each bind GTP; these read KSD and SVG.

This sequence belongs to the adenylosuccinate synthetase family. In terms of assembly, homodimer. Requires Mg(2+) as cofactor.

The protein resides in the cytoplasm. It carries out the reaction IMP + L-aspartate + GTP = N(6)-(1,2-dicarboxyethyl)-AMP + GDP + phosphate + 2 H(+). It participates in purine metabolism; AMP biosynthesis via de novo pathway; AMP from IMP: step 1/2. Plays an important role in the de novo pathway of purine nucleotide biosynthesis. Catalyzes the first committed step in the biosynthesis of AMP from IMP. The polypeptide is Adenylosuccinate synthetase (Bacteroides fragilis (strain ATCC 25285 / DSM 2151 / CCUG 4856 / JCM 11019 / LMG 10263 / NCTC 9343 / Onslow / VPI 2553 / EN-2)).